The sequence spans 309 residues: Protein FdhE homolog (309 aa).

This sequence belongs to the FdhE family.

The protein resides in the cytoplasm. Necessary for formate dehydrogenase activity. This chain is Protein FdhE homolog, found in Citrobacter koseri (strain ATCC BAA-895 / CDC 4225-83 / SGSC4696).